Reading from the N-terminus, the 414-residue chain is NFATC2-interacting protein (414 aa).

The tract at residues 1–42 (MAEPLRRRGPRSRGGRASRGARRARAARGRCPRAPRSPTRLI) is disordered. Over residues 7-33 (RRGPRSRGGRASRGARRARAARGRCPR) the composition is skewed to basic residues. Ser52 and Ser54 each carry phosphoserine. The tract at residues 63-118 (ADPGEVPVARLPAPAAPEQDSDSDSEGAAEGPAGAPRTLVRRRRRLLDPGEAPVVP) is disordered. The span at 68–79 (VPVARLPAPAAP) shows a compositional bias: low complexity. 3 positions are modified to phosphoserine: Ser83, Ser85, and Ser87. Positions 90–100 (AAEGPAGAPRT) are enriched in low complexity. Position 121 is a phosphoserine (Ser121). Residue Lys123 forms a Glycyl lysine isopeptide (Lys-Gly) (interchain with G-Cter in SUMO2) linkage. Residues 139–208 (KLCPSEPEDE…SSRNKSRKHT (70 aa)) are disordered. Positions 170–229 (KKKLRKKHEKEEKKMEEFPDQDISPLPQPSSRNKSRKHTEALQKLREVNKRLQDLRSCLS) form a coiled coil. Residues Ser193, Ser199, and Ser309 each carry the phosphoserine modification. Phosphothreonine occurs at positions 311 and 313. Residues 343 to 414 (LRLRVQGKEK…ESGDLIEVWG (72 aa)) enclose the Ubiquitin-like domain. A phosphoserine mark is found at Ser364 and Ser385.

Interacts with NFATC2, TRAF1, TRAF2 and PRMT1. Interacts with UBE2I/UBC9. In terms of processing, methylation at the N-terminus by PRMT1 modulates interaction with the NFAT complex and results in augmented cytokine production.

Its subcellular location is the nucleus. The protein localises to the cytoplasm. Its function is as follows. In T-helper 2 (Th2) cells, regulates the magnitude of NFAT-driven transcription of a specific subset of cytokine genes, including IL3, IL4, IL5 and IL13, but not IL2. Recruits PRMT1 to the IL4 promoter; this leads to enhancement of histone H4 'Arg-3'-methylation and facilitates subsequent histone acetylation at the IL4 locus, thus promotes robust cytokine expression. Down-regulates formation of poly-SUMO chains by UBE2I/UBC9. This chain is NFATC2-interacting protein (Nfatc2ip), found in Rattus norvegicus (Rat).